Reading from the N-terminus, the 584-residue chain is UvrABC system protein C (584 aa).

The GIY-YIG domain occupies 12–89 (NKPGCYLFLN…IKKYRPKYNV (78 aa)). The region spanning 194-229 (NQVKQTLVKQMQKASDNLQFEQAKRIKDQITSLDFI) is the UVR domain.

The protein belongs to the UvrC family. Interacts with UvrB in an incision complex.

The protein resides in the cytoplasm. Functionally, the UvrABC repair system catalyzes the recognition and processing of DNA lesions. UvrC both incises the 5' and 3' sides of the lesion. The N-terminal half is responsible for the 3' incision and the C-terminal half is responsible for the 5' incision. This Mycoplasma capricolum subsp. capricolum (strain California kid / ATCC 27343 / NCTC 10154) protein is UvrABC system protein C.